The following is a 217-amino-acid chain: Large ribosomal subunit protein bL25 (217 aa).

The tract at residues 178-217 is disordered; it reads VVAPTEEPTEEEIEAMEGEQQTEEPEVVGESKEDEEKTEE. The segment covering 184 to 205 has biased composition (acidic residues); the sequence is EPTEEEIEAMEGEQQTEEPEVV. Residues 206–217 are compositionally biased toward basic and acidic residues; sequence GESKEDEEKTEE.

Belongs to the bacterial ribosomal protein bL25 family. CTC subfamily. As to quaternary structure, part of the 50S ribosomal subunit; part of the 5S rRNA/L5/L18/L25 subcomplex. Contacts the 5S rRNA. Binds to the 5S rRNA independently of L5 and L18.

This is one of the proteins that binds to the 5S RNA in the ribosome where it forms part of the central protuberance. In Staphylococcus aureus (strain USA300), this protein is Large ribosomal subunit protein bL25.